The primary structure comprises 637 residues: Probable potassium transport system protein Kup (637 aa).

A run of 12 helical transmembrane segments spans residues 25–45 (ISLAALGVVFGDIGTSPLYAI), 62–82 (VLGVLSLIFWALVLIVSLKYL), 115–135 (WFLVGIGLFGASLLYGDGMIT), 149–169 (IIAPAFKDLVIPITVIILTGL), 180–200 (VGALFGPVILLWFAVIGVLGL), 227–247 (LQGFMVLGAVFLSVTGAEALY), 263–283 (ILFVLPALLLNYFGQGALLLF), 295–315 (LVPSWAMIPMVILATSATIIA), 352–372 (IYVPGANWALMYATIGLVIGF), 378–398 (LAAAYGVAVTATMLISTILFY), 410–430 (LATNLLVSFFFVIDLAFFGAS), and 434–454 (LFHGAWFPLVIGLVLFTLMLT).

This sequence belongs to the HAK/KUP transporter (TC 2.A.72) family.

It localises to the cell inner membrane. It catalyses the reaction K(+)(in) + H(+)(in) = K(+)(out) + H(+)(out). In terms of biological role, transport of potassium into the cell. Likely operates as a K(+):H(+) symporter. The chain is Probable potassium transport system protein Kup from Chlorobium phaeobacteroides (strain DSM 266 / SMG 266 / 2430).